The sequence spans 802 residues: Phenylalanine--tRNA ligase beta subunit (802 aa).

Residues 40-155 (SASLKNVVVG…EHVETGVSAI (116 aa)) form the tRNA-binding domain. The region spanning 409–484 (KAVNKIETSL…RIYGYDEIPV (76 aa)) is the B5 domain. 4 residues coordinate Mg(2+): aspartate 462, aspartate 468, glutamate 471, and glutamate 472. The FDX-ACB domain maps to 709–802 (PRYPEMTRDL…LQAKLHAIIR (94 aa)).

It belongs to the phenylalanyl-tRNA synthetase beta subunit family. Type 1 subfamily. In terms of assembly, tetramer of two alpha and two beta subunits. It depends on Mg(2+) as a cofactor.

It is found in the cytoplasm. It catalyses the reaction tRNA(Phe) + L-phenylalanine + ATP = L-phenylalanyl-tRNA(Phe) + AMP + diphosphate + H(+). In Listeria innocua serovar 6a (strain ATCC BAA-680 / CLIP 11262), this protein is Phenylalanine--tRNA ligase beta subunit.